The primary structure comprises 354 residues: Dihydroorotate dehydrogenase (quinone) (354 aa).

FMN-binding positions include 61 to 65 and A85; that span reads AGYDK. K65 provides a ligand contact to substrate. 110-114 serves as a coordination point for substrate; that stretch reads NRFGF. N139 and N170 together coordinate FMN. N170 contributes to the substrate binding site. S173 serves as the catalytic Nucleophile. Position 175 (N175) interacts with substrate. FMN-binding residues include K211 and T239. Substrate is bound at residue 240-241; it reads NT. FMN-binding positions include G261, G290, and 311–312; that span reads YT.

Belongs to the dihydroorotate dehydrogenase family. Type 2 subfamily. Monomer. It depends on FMN as a cofactor.

It localises to the cell membrane. It carries out the reaction (S)-dihydroorotate + a quinone = orotate + a quinol. Its pathway is pyrimidine metabolism; UMP biosynthesis via de novo pathway; orotate from (S)-dihydroorotate (quinone route): step 1/1. Functionally, catalyzes the conversion of dihydroorotate to orotate with quinone as electron acceptor. The polypeptide is Dihydroorotate dehydrogenase (quinone) (Cereibacter sphaeroides (strain KD131 / KCTC 12085) (Rhodobacter sphaeroides)).